The chain runs to 467 residues: Probable serine hydroxymethyltransferase, cytosolic (467 aa).

Lysine 243 is modified (N6-(pyridoxal phosphate)lysine).

The protein belongs to the SHMT family. Homotetramer. Pyridoxal 5'-phosphate serves as cofactor.

The protein resides in the cytoplasm. The enzyme catalyses (6R)-5,10-methylene-5,6,7,8-tetrahydrofolate + glycine + H2O = (6S)-5,6,7,8-tetrahydrofolate + L-serine. Its pathway is one-carbon metabolism; tetrahydrofolate interconversion. Its function is as follows. Interconversion of serine and glycine. The protein is Probable serine hydroxymethyltransferase, cytosolic of Schizosaccharomyces pombe (strain 972 / ATCC 24843) (Fission yeast).